Reading from the N-terminus, the 399-residue chain is Elongation factor Tu (399 aa).

The 195-residue stretch at 10–204 (KPHVNIGTIG…AVDTSIPEPE (195 aa)) folds into the tr-type G domain. A G1 region spans residues 19-26 (GHVDHGKT). 19–26 (GHVDHGKT) serves as a coordination point for GTP. Thr26 contacts Mg(2+). The G2 stretch occupies residues 60–64 (GITIN). The segment at 81 to 84 (DCPG) is G3. GTP is bound by residues 81 to 85 (DCPGH) and 136 to 139 (NKCD). The interval 136–139 (NKCD) is G4. The G5 stretch occupies residues 174 to 176 (SGL).

It belongs to the TRAFAC class translation factor GTPase superfamily. Classic translation factor GTPase family. EF-Tu/EF-1A subfamily. Monomer.

It localises to the cytoplasm. The catalysed reaction is GTP + H2O = GDP + phosphate + H(+). GTP hydrolase that promotes the GTP-dependent binding of aminoacyl-tRNA to the A-site of ribosomes during protein biosynthesis. The polypeptide is Elongation factor Tu (Prochlorococcus marinus (strain MIT 9303)).